Here is a 963-residue protein sequence, read N- to C-terminus: MHC class II regulatory factor RFX1 (963 aa).

4 disordered regions span residues 1-88 (MATQ…APSP), 105-126 (ASETVSEASPSSTASQTGVPTQ), 174-218 (QSPA…GTPA), and 361-392 (SSSEAGASNSSVGAGGNGGGGSSGGGSGGSSG). Residues 20–41 (PQAPPQALPQPPPPAAPQPPAA) show a composition bias toward pro residues. Low complexity predominate over residues 42-67 (ATPQPQYVTELQSPQPQTQPPGSQKQ). Residue S54 is modified to Phosphoserine. Residues 75–87 (APAPSQPATPAPS) show a composition bias toward pro residues. 3 stretches are compositionally biased toward polar residues: residues 107 to 119 (ETVSEASPSSTAS), 181 to 196 (KSGQVSLTVHSAQQVH), and 204 to 214 (VQANNSTSKTA). A compositionally biased stretch (low complexity) spans 361–372 (SSSEAGASNSSV). The span at 373–392 (GAGGNGGGGSSGGGSGGSSG) shows a compositional bias: gly residues. Residues 423-498 (TVQWLLDNYE…YHYYGLRIKA (76 aa)) constitute a DNA-binding region (RFX-type winged-helix). The interval 899–948 (SLNPLDPDKDEEEEEEEESEDELPQDISLAAGSESPALGPEALEPPAKLA) is disordered. Residues 906 to 922 (DKDEEEEEEEESEDELP) show a composition bias toward acidic residues. Over residues 932–947 (ESPALGPEALEPPAKL) the composition is skewed to low complexity. S962 and S963 each carry phosphoserine.

It belongs to the RFX family. Homodimer; binds DNA as a homodimer. Heterodimer; heterodimerizes with RFX2 and RFX3.

The protein localises to the nucleus. Its function is as follows. Regulatory factor essential for MHC class II genes expression. Binds to the X boxes of MHC class II genes. The protein is MHC class II regulatory factor RFX1 (Rfx1) of Mus musculus (Mouse).